Reading from the N-terminus, the 241-residue chain is 1-(5-phosphoribosyl)-5-[(5-phosphoribosylamino)methylideneamino] imidazole-4-carboxamide isomerase (241 aa).

Residue Asp8 is the Proton acceptor of the active site. Catalysis depends on Asp130, which acts as the Proton donor.

Belongs to the HisA/HisF family.

Its subcellular location is the cytoplasm. It catalyses the reaction 1-(5-phospho-beta-D-ribosyl)-5-[(5-phospho-beta-D-ribosylamino)methylideneamino]imidazole-4-carboxamide = 5-[(5-phospho-1-deoxy-D-ribulos-1-ylimino)methylamino]-1-(5-phospho-beta-D-ribosyl)imidazole-4-carboxamide. Its pathway is amino-acid biosynthesis; L-histidine biosynthesis; L-histidine from 5-phospho-alpha-D-ribose 1-diphosphate: step 4/9. This is 1-(5-phosphoribosyl)-5-[(5-phosphoribosylamino)methylideneamino] imidazole-4-carboxamide isomerase from Leptospira borgpetersenii serovar Hardjo-bovis (strain JB197).